The sequence spans 667 residues: Long-chain-fatty-acid--CoA ligase ACSBG2 (667 aa).

ATP-binding positions include 227-235 (TSGTTGTPK), 418-423 (EIYGMS), Asp-496, Arg-511, and Arg-624.

It belongs to the ATP-dependent AMP-binding enzyme family. Bubblegum subfamily. In terms of tissue distribution, testis- and brainstem-specific. Expressed in pubertal and adult testis. Enriched in germ cells and Sertoli cells while present at a lower level in Leydig cells. Present in testicular Sertoli cells and large motoneurons in the medulla oblongata and cervical spinal cord (at protein level).

It localises to the cytoplasm. The protein localises to the membrane. It carries out the reaction a long-chain fatty acid + ATP + CoA = a long-chain fatty acyl-CoA + AMP + diphosphate. The catalysed reaction is (5Z,8Z,11Z,14Z)-eicosatetraenoate + ATP + CoA = (5Z,8Z,11Z,14Z)-eicosatetraenoyl-CoA + AMP + diphosphate. It catalyses the reaction hexadecanoate + ATP + CoA = hexadecanoyl-CoA + AMP + diphosphate. The enzyme catalyses (9Z)-octadecenoate + ATP + CoA = (9Z)-octadecenoyl-CoA + AMP + diphosphate. It carries out the reaction (9Z,12Z)-octadecadienoate + ATP + CoA = (9Z,12Z)-octadecadienoyl-CoA + AMP + diphosphate. The catalysed reaction is tetracosanoate + ATP + CoA = tetracosanoyl-CoA + AMP + diphosphate. Its function is as follows. Catalyzes the conversion of fatty acids such as long chain and very long-chain fatty acids to their active form acyl-CoAs for both synthesis of cellular lipids, and degradation via beta-oxidation. Can activate diverse saturated, monosaturated and polyunsaturated fatty acids. Has increased ability to activate oleic and linoleic acid. May play a role in spermatogenesis. The protein is Long-chain-fatty-acid--CoA ligase ACSBG2 of Mus musculus (Mouse).